The following is a 228-amino-acid chain: 2-C-methyl-D-erythritol 4-phosphate cytidylyltransferase (228 aa).

The protein belongs to the IspD/TarI cytidylyltransferase family. IspD subfamily.

It carries out the reaction 2-C-methyl-D-erythritol 4-phosphate + CTP + H(+) = 4-CDP-2-C-methyl-D-erythritol + diphosphate. It functions in the pathway isoprenoid biosynthesis; isopentenyl diphosphate biosynthesis via DXP pathway; isopentenyl diphosphate from 1-deoxy-D-xylulose 5-phosphate: step 2/6. Catalyzes the formation of 4-diphosphocytidyl-2-C-methyl-D-erythritol from CTP and 2-C-methyl-D-erythritol 4-phosphate (MEP). This is 2-C-methyl-D-erythritol 4-phosphate cytidylyltransferase from Geobacillus thermodenitrificans (strain NG80-2).